The chain runs to 180 residues: NADH-quinone oxidoreductase subunit I (180 aa).

4Fe-4S ferredoxin-type domains follow at residues 48–80 (IVLT…LQKA) and 90–119 (EFFR…LTPD). Residues C60, C63, C66, C70, C99, C102, C105, and C109 each coordinate [4Fe-4S] cluster. Residues 160–180 (GKPKGSAQKEAAPIDVKSILP) are disordered.

This sequence belongs to the complex I 23 kDa subunit family. NDH-1 is composed of 14 different subunits. Subunits NuoA, H, J, K, L, M, N constitute the membrane sector of the complex. Requires [4Fe-4S] cluster as cofactor.

It localises to the cell inner membrane. It catalyses the reaction a quinone + NADH + 5 H(+)(in) = a quinol + NAD(+) + 4 H(+)(out). NDH-1 shuttles electrons from NADH, via FMN and iron-sulfur (Fe-S) centers, to quinones in the respiratory chain. The immediate electron acceptor for the enzyme in this species is believed to be ubiquinone. Couples the redox reaction to proton translocation (for every two electrons transferred, four hydrogen ions are translocated across the cytoplasmic membrane), and thus conserves the redox energy in a proton gradient. The protein is NADH-quinone oxidoreductase subunit I of Tolumonas auensis (strain DSM 9187 / NBRC 110442 / TA 4).